The primary structure comprises 306 residues: Ribosomal protein L11 methyltransferase (306 aa).

Residues Thr-152, Gly-179, Asp-201, and Asn-243 each coordinate S-adenosyl-L-methionine.

This sequence belongs to the methyltransferase superfamily. PrmA family.

It is found in the cytoplasm. It carries out the reaction L-lysyl-[protein] + 3 S-adenosyl-L-methionine = N(6),N(6),N(6)-trimethyl-L-lysyl-[protein] + 3 S-adenosyl-L-homocysteine + 3 H(+). Functionally, methylates ribosomal protein L11. The polypeptide is Ribosomal protein L11 methyltransferase (Geobacter sp. (strain M21)).